Here is a 612-residue protein sequence, read N- to C-terminus: MPRILAATAGSFVLKAYFHRWRSLVILALLLAPLLWPLQYFAERYYSEQLAEQNRQTLDLYVANLLGTLRRYEELPQILGGLPVLRQALQQPGDPLLQKIANEALADIRRRTGADVIYLLQPDGTTQVASNWAQADSFVHRNFAFRPYYREAMQGRLARFFGLGTTSIKRGYYFASAVKEGSRIIGVLVVKVDLEHIERLWGNSPEQLLVIDNYGVVILSSREDWRFHASRPLSAAERDEIHANIPYPVQDPKPLRLQQSAWLSQSRTLPETGWTVSIYAPRTLIERPVRSVLLIGGATLLALLLLLTLLTLSRRHYLDRIALEAEAKRQLEERVLERTRELENANAQLQQEVHEREQAQRELMRAQDEVVQAGKLTALGTMSASISHELNQPLAAIRSYADNARVLLDHQRTEDARGNLEQISDLTTRMASIIAHLKAYARGARRAPENVQLQPAIEDALSMVASRRRAMNVELLRDVPDAPLWVQAGETRLRQILGNLLTNALDALAEKAPPRRLWVIASQDQHGVTLTLRDNGPGFSEDALAHAHEPFFTTKTTAKGLGLGLAICDNLLRALGGRLEMGNHLEGGAVVRLHLLPGVPGVAAMPQEETRA.

The next 2 helical transmembrane spans lie at 23–43 (SLVILALLLAPLLWPLQYFAE) and 292–312 (VLLIGGATLLALLLLLTLLTL). The stretch at 328–376 (KRQLEERVLERTRELENANAQLQQEVHEREQAQRELMRAQDEVVQAGKL) forms a coiled coil. Residues 385–599 (SISHELNQPL…VVRLHLLPGV (215 aa)) enclose the Histidine kinase domain. The residue at position 388 (histidine 388) is a Phosphohistidine; by autocatalysis.

Autophosphorylated.

It localises to the cell inner membrane. The enzyme catalyses ATP + protein L-histidine = ADP + protein N-phospho-L-histidine.. Member of the two-component regulatory system DctB/DctD, which regulates C4-dicarboxylate transport via regulation of expression of the dctPQM operon and dctA. DctB functions as a membrane-associated protein kinase that phosphorylates DctD in response to environmental signals. This chain is C4-dicarboxylate transport sensor protein DctB, found in Pseudomonas aeruginosa (strain ATCC 15692 / DSM 22644 / CIP 104116 / JCM 14847 / LMG 12228 / 1C / PRS 101 / PAO1).